The chain runs to 87 residues: Large ribosomal subunit protein bL27 (87 aa).

A disordered region spans residues 1 to 24 (MAHKKGTGSTRNGRDSRSQRLGVK).

Belongs to the bacterial ribosomal protein bL27 family.

The protein is Large ribosomal subunit protein bL27 of Crocosphaera subtropica (strain ATCC 51142 / BH68) (Cyanothece sp. (strain ATCC 51142)).